A 51-amino-acid polypeptide reads, in one-letter code: FANQHLCGSHLVEALYLVCGERGFFYTPKAGIVEQCCASVCSLYQLENYCN.

3 disulfides stabilise this stretch: cysteine 7/cysteine 37, cysteine 19/cysteine 50, and cysteine 36/cysteine 41.

It belongs to the insulin family. In terms of assembly, heterodimer of a B chain and an A chain linked by two disulfide bonds.

It localises to the secreted. In terms of biological role, insulin decreases blood glucose concentration. It increases cell permeability to monosaccharides, amino acids and fatty acids. It accelerates glycolysis, the pentose phosphate cycle, and glycogen synthesis in liver. In Camelus dromedarius (Dromedary), this protein is Insulin (INS).